The sequence spans 485 residues: N-succinylglutamate 5-semialdehyde dehydrogenase (485 aa).

Position 220–225 (220–225 (GSANTG)) interacts with NAD(+). Catalysis depends on residues E243 and C278.

Belongs to the aldehyde dehydrogenase family. AstD subfamily.

The catalysed reaction is N-succinyl-L-glutamate 5-semialdehyde + NAD(+) + H2O = N-succinyl-L-glutamate + NADH + 2 H(+). It participates in amino-acid degradation; L-arginine degradation via AST pathway; L-glutamate and succinate from L-arginine: step 4/5. In terms of biological role, catalyzes the NAD-dependent reduction of succinylglutamate semialdehyde into succinylglutamate. The chain is N-succinylglutamate 5-semialdehyde dehydrogenase from Vibrio vulnificus (strain YJ016).